We begin with the raw amino-acid sequence, 633 residues long: Glutamyl-tRNA(Gln) amidotransferase subunit E (633 aa).

A disordered region spans residues 415-437 (LDDGTTKFLRPQPGSARMYPETD).

The protein belongs to the GatB/GatE family. GatE subfamily. Heterodimer of GatD and GatE.

It catalyses the reaction L-glutamyl-tRNA(Gln) + L-glutamine + ATP + H2O = L-glutaminyl-tRNA(Gln) + L-glutamate + ADP + phosphate + H(+). In terms of biological role, allows the formation of correctly charged Gln-tRNA(Gln) through the transamidation of misacylated Glu-tRNA(Gln) in organisms which lack glutaminyl-tRNA synthetase. The reaction takes place in the presence of glutamine and ATP through an activated gamma-phospho-Glu-tRNA(Gln). The GatDE system is specific for glutamate and does not act on aspartate. The protein is Glutamyl-tRNA(Gln) amidotransferase subunit E of Saccharolobus solfataricus (strain ATCC 35092 / DSM 1617 / JCM 11322 / P2) (Sulfolobus solfataricus).